The primary structure comprises 222 residues: Methylthioribulose-1-phosphate dehydratase (222 aa).

2 residues coordinate Zn(2+): H94 and H96.

The protein belongs to the aldolase class II family. MtnB subfamily. Zn(2+) is required as a cofactor.

The enzyme catalyses 5-(methylsulfanyl)-D-ribulose 1-phosphate = 5-methylsulfanyl-2,3-dioxopentyl phosphate + H2O. The protein operates within amino-acid biosynthesis; L-methionine biosynthesis via salvage pathway; L-methionine from S-methyl-5-thio-alpha-D-ribose 1-phosphate: step 2/6. In terms of biological role, catalyzes the dehydration of methylthioribulose-1-phosphate (MTRu-1-P) into 2,3-diketo-5-methylthiopentyl-1-phosphate (DK-MTP-1-P). This is Methylthioribulose-1-phosphate dehydratase from Yersinia pseudotuberculosis serotype IB (strain PB1/+).